We begin with the raw amino-acid sequence, 131 residues long: MSWQTYVDEHLMCEIEGHHLTSAAIVGHDGATWAQSTAFPEFKPEEMAAIMKDFDEPGHLAPTGLILGGTKYMVIQGEPGAVIRGKKGSGGITVKKTGQSLIIGIYDEPMTPGQCNLVVERLGDYLLEQGM.

Cysteines 13 and 115 form a disulfide. An Involved in PIP2 interaction motif is present at residues 81 to 97 (AVIRGKKGSGGITVKKT). Thr111 is subject to Phosphothreonine.

Belongs to the profilin family. Multimer. Occurs in many kinds of cells as a complex with monomeric actin in a 1:1 ratio. Post-translationally, phosphorylated by MAP kinases. As to expression, pollen specific.

It is found in the cytoplasm. Its subcellular location is the cytoskeleton. In terms of biological role, binds to actin and affects the structure of the cytoskeleton. At high concentrations, profilin prevents the polymerization of actin, whereas it enhances it at low concentrations. By binding to PIP2, it inhibits the formation of IP3 and DG. The chain is Profilin-1 (PRO1) from Zea mays (Maize).